A 419-amino-acid polypeptide reads, in one-letter code: UDP-N-acetylglucosamine 1-carboxyvinyltransferase (419 aa).

Residue 22–23 (KN) coordinates phosphoenolpyruvate. Arginine 92 contributes to the UDP-N-acetyl-alpha-D-glucosamine binding site. Cysteine 116 (proton donor) is an active-site residue. Cysteine 116 carries the 2-(S-cysteinyl)pyruvic acid O-phosphothioketal modification. UDP-N-acetyl-alpha-D-glucosamine is bound by residues aspartate 306 and isoleucine 328.

Belongs to the EPSP synthase family. MurA subfamily.

The protein localises to the cytoplasm. It catalyses the reaction phosphoenolpyruvate + UDP-N-acetyl-alpha-D-glucosamine = UDP-N-acetyl-3-O-(1-carboxyvinyl)-alpha-D-glucosamine + phosphate. It functions in the pathway cell wall biogenesis; peptidoglycan biosynthesis. In terms of biological role, cell wall formation. Adds enolpyruvyl to UDP-N-acetylglucosamine. The sequence is that of UDP-N-acetylglucosamine 1-carboxyvinyltransferase from Psychromonas ingrahamii (strain DSM 17664 / CCUG 51855 / 37).